A 611-amino-acid polypeptide reads, in one-letter code: Major facilitator superfamily domain-containing protein YCR023C (611 aa).

Topologically, residues 1 to 89 (MARQKLTFKE…GRFSEKHGRK (89 aa)) are extracellular. The chain crosses the membrane as a helical span at residues 90 to 110 (ITLTCGLIGTSVSLLILGFSR). The Cytoplasmic portion of the chain corresponds to 111–152 (NFYQALVARSLMGLLNGNVGVIRTIIGEIATERKHQALAFST). The chain crosses the membrane as a helical span at residues 153 to 173 (MPLLFQFGAVVGPMIGGFLVF). Over 174-199 (RDGTMNEVPLWFPHFAKRIIRSYPYA) the chain is Extracellular. The helical transmembrane segment at 200–220 (LPNVVVCMFLMFGLTNATLFL) threads the bilayer. Over 221–353 (EETHPAFKDR…SIFHHVFHTK (133 aa)) the chain is Cytoplasmic. Basic and acidic residues predominate over residues 261–271 (DDSENIHHRNE). The interval 261-301 (DDSENIHHRNENVNSIRGQDSEEDENSPLVNTTNDDDTESI) is disordered. The residue at position 313 (Ser-313) is a Phosphoserine. The chain crosses the membrane as a helical span at residues 354-372 (VFYPISVNFIMALHLIVYN). Residues 373–413 (EFLPVFLAYDLAVDPENPKKLASKFPWKISGGIGYEPEQTG) lie on the Extracellular side of the membrane. The helical transmembrane segment at 414-434 (TLLSTTGIFGCFVVIFIFPIV) threads the bilayer. At 435 to 442 (DRNFDCLT) the chain is on the cytoplasmic side. The chain crosses the membrane as a helical span at residues 443–463 (IFRTLVKLYPIMYVMVPYVVF). At 464-542 (LQNERIPSWY…YIMSWSQQND (79 aa)) the chain is on the extracellular side. The chain crosses the membrane as a helical span at residues 543-563 (VAWVSWWSLSLFCMVALYQSY). The Cytoplasmic segment spans residues 564 to 611 (KIAPIDDNENELHGQGSEDAYNSQSQSSDLRMAHRSSLSSLSNQRCTT). Phosphoserine is present on Ser-603.

The protein belongs to the major facilitator superfamily.

It localises to the membrane. It catalyses the reaction chloride(in) = chloride(out). Its function is as follows. Outward-rectifying chloride channel involved in chloride homeostasis. The protein is Major facilitator superfamily domain-containing protein YCR023C of Saccharomyces cerevisiae (strain ATCC 204508 / S288c) (Baker's yeast).